Here is a 472-residue protein sequence, read N- to C-terminus: Succinate-semialdehyde dehydrogenase [NADP(+)] (472 aa).

Residues W134–N135, K158–S161, and G210–S211 contribute to the NADP(+) site. E232 functions as the Proton acceptor in the catalytic mechanism. L233 is a binding site for NADP(+). The active-site Nucleophile is C266. E363 is an NADP(+) binding site.

Belongs to the aldehyde dehydrogenase family.

It carries out the reaction succinate semialdehyde + NADP(+) + H2O = succinate + NADPH + 2 H(+). In terms of biological role, catalyzes the NADP(+)-dependent oxidation of succinate semialdehyde to succinate. It is believed to be the main source of succinate semialdehyde dehydrogenase activity in Mycobacterium. The chain is Succinate-semialdehyde dehydrogenase [NADP(+)] (gabD1) from Mycobacterium avium (strain 104).